A 156-amino-acid chain; its full sequence is Transcriptional repressor NrdR (156 aa).

The segment at 3-34 (CPKCSSTHSRVVDSRHADDANAIRRRRECENC) is a zinc-finger region. In terms of domain architecture, ATP-cone spans 49–139 (LIVVKKDGTR…VYKEFKDVDQ (91 aa)).

It belongs to the NrdR family. Zn(2+) is required as a cofactor.

In terms of biological role, negatively regulates transcription of bacterial ribonucleotide reductase nrd genes and operons by binding to NrdR-boxes. This chain is Transcriptional repressor NrdR, found in Staphylococcus haemolyticus (strain JCSC1435).